The following is a 1257-amino-acid chain: Bifunctional autolysin (1257 aa).

The N-terminal stretch at 1–29 (MAKKFNYKLPSMVALTLVGSAVTAHQVQA) is a signal peptide. Over residues 99–137 (QVNGDTRATQSTTSNNAKPVTKSTNTTAPKTNNNVTSAG) the composition is skewed to polar residues. Disordered regions lie at residues 99-150 (QVNG…NSEN), 173-217 (AAPK…KYKP), and 417-441 (TQST…PSTG). 2 stretches are compositionally biased toward low complexity: residues 173 to 208 (AAPK…AAAP) and 419 to 440 (STTT…TPST). The interval 197 to 776 (ASAQPRSAAA…AVAQPKTAVK (580 aa)) is N-acetylmuramoyl-L-alanine amidase. GW domains lie at 444-518 (TVAA…YNTA), 520-594 (SPVN…DTAK), 613-687 (TVSS…YNNA), 689-763 (SPVN…VPAA), 785-860 (TTQT…VQNL), 862-937 (KEVK…APTA), and 944-1018 (AAKD…KELI). Positions 777–1257 (AYAVTKPQTT…GKYFDIPQYK (481 aa)) are endo-beta-N-acetylglucosaminidase.

In the N-terminal section; belongs to the N-acetylmuramoyl-L-alanine amidase 2 family. The protein in the C-terminal section; belongs to the glycosyl hydrolase 73 family. Oligomer; forms a ring structure at the cell surface which is important for efficient partitioning of daughter cells after cell division. In terms of processing, undergoes proteolytic processing to generate the two extracellular lytic enzymes, probably at the septal region on the cell surface.

It localises to the secreted. It carries out the reaction Hydrolyzes the link between N-acetylmuramoyl residues and L-amino acid residues in certain cell-wall glycopeptides.. The catalysed reaction is an N(4)-(oligosaccharide-(1-&gt;3)-[oligosaccharide-(1-&gt;6)]-beta-D-Man-(1-&gt;4)-beta-D-GlcNAc-(1-&gt;4)-alpha-D-GlcNAc)-L-asparaginyl-[protein] + H2O = an oligosaccharide-(1-&gt;3)-[oligosaccharide-(1-&gt;6)]-beta-D-Man-(1-&gt;4)-D-GlcNAc + N(4)-(N-acetyl-beta-D-glucosaminyl)-L-asparaginyl-[protein]. Functionally, endohydrolysis of the di-N-acetylchitobiosyl unit in high-mannose glycopeptides and glycoproteins containing the -[(Man)5(GlcNAc)2]-Asn structure. One N-acetyl-D-glucosamine residue remains attached to the protein; the rest of the oligosaccharide is released intact. Cleaves the peptidoglycan connecting the daughter cells at the end of the cell division cycle, resulting in the separation of the two newly divided cells. Acts as an autolysin in penicillin-induced lysis. This chain is Bifunctional autolysin (atl), found in Staphylococcus aureus (strain MRSA252).